Reading from the N-terminus, the 619-residue chain is MTIIYFVLAALALGFLILIHELGHLLAAKAVGMSVESFSIGFGPALVRKKMGSVEYRIGAIPFGGYVRIKGMDRNDKDNSGDKEKTVYDIPEGFFSKSPWKRIFVLAAGPLANLLVAIFVFGILYFSGGRTKSFSEYTSIVGWVHPSLEQQGLHAGDQIFFCNGQPYSGHKMAFSSSLLERKLSLQGQHPAYFSESEAFSLEAPFNPNMEGVPCLGASYLLYRGSDPLPEKSPLVDAGLSEGDRLVWMDGLLVFSGAQVSQMLNEKQSFLRVERQGKVVFVRQARVLAGDLTLTPYFKNELIDCQYEAGLKGKWASLYTLPYIINGDGFVESKVKLLNDERVSLDYNLELGDKIVAVDGIPVMSNADILRLVQDHRVSLIFQRMSPEQLTVLEQKAADQAFINSYDMDDLLRVAESVGEEREVSRLGDYRLVTRVQPRPWAHIYSEALLDKQRALASKFRDEQERRYYLERIEAEKQRISLGIPLKDLAVQYNPDPWVLMEESVSDSLKTVKALGMGRVSPQWLSGPVGIVRILHTGWSVGIPEALAWIGLISVNLAVLNLLPIPVLDGGYILLCLWEILSRRRLNMRLVEKALVPFMILLVLFFVFLTLQDLSRVFVG.

A Zn(2+)-binding site is contributed by His-20. Glu-21 is a catalytic residue. His-24 is a Zn(2+) binding site. Transmembrane regions (helical) follow at residues 103 to 125, 558 to 580, and 593 to 610; these read IFVLAAGPLANLLVAIFVFGILY, VLNLLPIPVLDGGYILLCLWEIL, and ALVPFMILLVLFFVFLTL.

The protein belongs to the peptidase M50B family. Zn(2+) is required as a cofactor.

It is found in the cell inner membrane. This Chlamydia trachomatis serovar D (strain ATCC VR-885 / DSM 19411 / UW-3/Cx) protein is Putative zinc metalloprotease CT_072.